Here is a 152-residue protein sequence, read N- to C-terminus: UPF0179 protein HQ_3004A (152 aa).

Belongs to the UPF0179 family.

This Haloquadratum walsbyi (strain DSM 16790 / HBSQ001) protein is UPF0179 protein HQ_3004A.